The sequence spans 122 residues: Small ribosomal subunit protein uS13 (122 aa).

Residues 94–122 form a disordered region; that stretch reads LSLPVRGQRTKTNSRTRKGKRKTVAGKKK. The segment covering 101-122 has biased composition (basic residues); that stretch reads QRTKTNSRTRKGKRKTVAGKKK.

Belongs to the universal ribosomal protein uS13 family. Part of the 30S ribosomal subunit. Forms a loose heterodimer with protein S19. Forms two bridges to the 50S subunit in the 70S ribosome.

In terms of biological role, located at the top of the head of the 30S subunit, it contacts several helices of the 16S rRNA. In the 70S ribosome it contacts the 23S rRNA (bridge B1a) and protein L5 of the 50S subunit (bridge B1b), connecting the 2 subunits; these bridges are implicated in subunit movement. Contacts the tRNAs in the A and P-sites. The polypeptide is Small ribosomal subunit protein uS13 (Chlamydia muridarum (strain MoPn / Nigg)).